A 68-amino-acid chain; its full sequence is uncharacterized protein (68 aa).

A run of 2 helical transmembrane segments spans residues 1–21 (MLFI…YFLP) and 28–48 (VHFS…LSSV).

Its subcellular location is the cell membrane. This is an uncharacterized protein from Haemophilus influenzae (strain ATCC 51907 / DSM 11121 / KW20 / Rd).